A 371-amino-acid chain; its full sequence is Putative glutamate--cysteine ligase 2 (371 aa).

The protein belongs to the glutamate--cysteine ligase type 2 family. YbdK subfamily.

It carries out the reaction L-cysteine + L-glutamate + ATP = gamma-L-glutamyl-L-cysteine + ADP + phosphate + H(+). ATP-dependent carboxylate-amine ligase which exhibits weak glutamate--cysteine ligase activity. The sequence is that of Putative glutamate--cysteine ligase 2 from Burkholderia lata (strain ATCC 17760 / DSM 23089 / LMG 22485 / NCIMB 9086 / R18194 / 383).